Consider the following 308-residue polypeptide: Ankyrin repeat and SOCS box protein 12 (308 aa).

ANK repeat units follow at residues 63-92 (IPGT…DVDS), 96-125 (KAQT…CPSG), 129-158 (NNCS…EANV), 171-200 (SCSG…DPDY), and 213-243 (QPRT…NIYL). Residues 268–308 (PRSLLSQTRLVIRRSLCRANQSQATDQLDIPPVLISYLKHQ) form the SOCS box domain.

The protein belongs to the ankyrin SOCS box (ASB) family. In terms of assembly, interacts with CUL5 and RNF7.

Its pathway is protein modification; protein ubiquitination. Functionally, probable substrate-recognition component of a SCF-like ECS (Elongin-Cullin-SOCS-box protein) E3 ubiquitin-protein ligase complex which mediates the ubiquitination and subsequent proteasomal degradation of target proteins. The chain is Ankyrin repeat and SOCS box protein 12 (Asb12) from Mus musculus (Mouse).